Here is a 119-residue protein sequence, read N- to C-terminus: MVSRKAVVVLLVVHAAAMLASHTEAFVPIFTYGELQRMQEKERNKGQKKSLSVQQASEELGPLDPSEPTKEEERVVIKLLAPVDIGIRMDSRQLEKYRATLERLLGQAPQSTQNQNAAK.

A signal peptide spans 1–25 (MVSRKAVVVLLVVHAAAMLASHTEA). The tract at residues 40-72 (EKERNKGQKKSLSVQQASEELGPLDPSEPTKEE) is disordered.

It belongs to the motilin family.

It localises to the secreted. Functionally, plays an important role in the regulation of interdigestive gastrointestinal motility and indirectly causes rhythmic contraction of duodenal and colonic smooth muscle. This is Promotilin (MLN) from Sus scrofa (Pig).